The sequence spans 629 residues: Embryonic polyadenylate-binding protein A (629 aa).

RRM domains follow at residues Ala11–Arg89, Gly99–Ser175, Thr191–Lys268, and Val294–Arg370. Positions Gln539–Ala616 constitute a PABC domain.

This sequence belongs to the polyadenylate-binding protein type-1 family. In terms of assembly, interacts with dazl in an RNA-independent manner. The C-terminus can self-associate and also interact with the C-terminus of pabpc1, independently of RNA. RRM 1 and RRM 2 interact with both eif4g1 and paip1, and the C-terminus also interacts with paip1. Prior to oocyte maturation, found in a complex with dazl and pum2 proteins and spdy1 mRNA; pum2 dissociates from the complex during maturation. Interacts with the translation termination factor sup35/erf3. As to expression, expressed in adult testis, but at a reduced level compared to oocytes.

The protein resides in the cytoplasm. In terms of biological role, binds and protects the poly(A) tail of mRNA with or without an AU-rich element (ARE) and prevents mRNA deadenylation. Stimulates the translation of mRNAs to which it is bound during early development. The protein is Embryonic polyadenylate-binding protein A (epabp-a) of Xenopus laevis (African clawed frog).